A 390-amino-acid chain; its full sequence is Probable galacturonosyltransferase-like 9 (390 aa).

The Cytoplasmic portion of the chain corresponds to 1–10 (MRLRFPMKSA). The chain crosses the membrane as a helical; Signal-anchor for type II membrane protein span at residues 11–31 (VLAFAIFLVFIPLFSVGIRMI). At 32-390 (PGRLTAVSAT…SELTEDSSFF (359 aa)) the chain is on the lumenal side. Residues N205 and N223 are each glycosylated (N-linked (GlcNAc...) asparagine).

The protein belongs to the glycosyltransferase 8 family.

It is found in the golgi apparatus membrane. The protein operates within glycan metabolism; pectin biosynthesis. In terms of biological role, may be involved in pectin and/or xylans biosynthesis in cell walls. This chain is Probable galacturonosyltransferase-like 9 (GATL9), found in Arabidopsis thaliana (Mouse-ear cress).